A 226-amino-acid chain; its full sequence is Xanthocillin biosynthesis cluster protein F (226 aa).

Its pathway is secondary metabolite biosynthesis. Part of the gene cluster that mediates the biosynthesis of the isocyanide xanthocillin and its derivatives. The first step of the pathway consists in the conversion of tyrosine into a vinyl-isonitrile intermediate by the isocyanide synthase xanB. Subsequent oxidative dimerization of this intermediate to form xanthocillin may involve the cytochrome P450 monooxygenase xanG, whose expression is coregulated with that of XanB. Xanthocillin can be further modified by the isonitrile hydratase-like protein xanA which introduces N-formyl groups and the methyltransferase xanE which introduces methyl groups, leading to the production of several derivatives including fumiformamide. Finally, fumiformamide can be subject to both oxidative and reductive cyclization to yield melanocins E and F, respectively. The protein is Xanthocillin biosynthesis cluster protein F of Aspergillus fumigatus (strain ATCC MYA-4609 / CBS 101355 / FGSC A1100 / Af293) (Neosartorya fumigata).